The primary structure comprises 354 residues: Fructose-bisphosphate aldolase (354 aa).

Ser-50 lines the D-glyceraldehyde 3-phosphate pocket. The Proton donor role is filled by Asp-83. The Zn(2+) site is built by His-84, Asp-105, Glu-142, and His-198. Residue Gly-199 coordinates dihydroxyacetone phosphate. His-232 contacts Zn(2+). Dihydroxyacetone phosphate contacts are provided by residues 233–235 (GSS) and 275–278 (NIDT).

It belongs to the class II fructose-bisphosphate aldolase family. Requires Zn(2+) as cofactor.

It carries out the reaction beta-D-fructose 1,6-bisphosphate = D-glyceraldehyde 3-phosphate + dihydroxyacetone phosphate. The protein operates within carbohydrate degradation; glycolysis; D-glyceraldehyde 3-phosphate and glycerone phosphate from D-glucose: step 4/4. Its function is as follows. Catalyzes the aldol condensation of dihydroxyacetone phosphate (DHAP or glycerone-phosphate) with glyceraldehyde 3-phosphate (G3P) to form fructose 1,6-bisphosphate (FBP) in gluconeogenesis and the reverse reaction in glycolysis. The sequence is that of Fructose-bisphosphate aldolase (fba) from Pseudomonas aeruginosa (strain ATCC 15692 / DSM 22644 / CIP 104116 / JCM 14847 / LMG 12228 / 1C / PRS 101 / PAO1).